The chain runs to 396 residues: Ribosomal RNA large subunit methyltransferase I (396 aa).

The region spanning S2 to F79 is the PUA domain.

It belongs to the methyltransferase superfamily. RlmI family.

The protein localises to the cytoplasm. It carries out the reaction cytidine(1962) in 23S rRNA + S-adenosyl-L-methionine = 5-methylcytidine(1962) in 23S rRNA + S-adenosyl-L-homocysteine + H(+). Functionally, specifically methylates the cytosine at position 1962 (m5C1962) of 23S rRNA. The protein is Ribosomal RNA large subunit methyltransferase I of Aeromonas salmonicida (strain A449).